A 456-amino-acid chain; its full sequence is UDP-N-acetylmuramoylalanine--D-glutamate ligase (456 aa).

Residue Gly121–Thr127 participates in ATP binding.

It belongs to the MurCDEF family.

Its subcellular location is the cytoplasm. The enzyme catalyses UDP-N-acetyl-alpha-D-muramoyl-L-alanine + D-glutamate + ATP = UDP-N-acetyl-alpha-D-muramoyl-L-alanyl-D-glutamate + ADP + phosphate + H(+). It functions in the pathway cell wall biogenesis; peptidoglycan biosynthesis. Cell wall formation. Catalyzes the addition of glutamate to the nucleotide precursor UDP-N-acetylmuramoyl-L-alanine (UMA). The chain is UDP-N-acetylmuramoylalanine--D-glutamate ligase from Desulfotalea psychrophila (strain LSv54 / DSM 12343).